A 336-amino-acid polypeptide reads, in one-letter code: Holliday junction branch migration complex subunit RuvB (336 aa).

Residues 1-182 (MKERIVNLET…FGMSFRMQFY (182 aa)) are large ATPase domain (RuvB-L). Residues L21, R22, G63, K66, T67, S68, 129–131 (EDF), R172, Y182, and R219 contribute to the ATP site. T67 contacts Mg(2+). Residues 183 to 253 (SPSELSLIIK…ITLHALNELG (71 aa)) form a small ATPAse domain (RuvB-S) region. The tract at residues 256–336 (ELGFDEADLA…IPTLNPQTLF (81 aa)) is head domain (RuvB-H). Residues R310 and R315 each contribute to the DNA site.

This sequence belongs to the RuvB family. As to quaternary structure, homohexamer. Forms an RuvA(8)-RuvB(12)-Holliday junction (HJ) complex. HJ DNA is sandwiched between 2 RuvA tetramers; dsDNA enters through RuvA and exits via RuvB. An RuvB hexamer assembles on each DNA strand where it exits the tetramer. Each RuvB hexamer is contacted by two RuvA subunits (via domain III) on 2 adjacent RuvB subunits; this complex drives branch migration. In the full resolvosome a probable DNA-RuvA(4)-RuvB(12)-RuvC(2) complex forms which resolves the HJ.

The protein localises to the cytoplasm. It catalyses the reaction ATP + H2O = ADP + phosphate + H(+). Functionally, the RuvA-RuvB-RuvC complex processes Holliday junction (HJ) DNA during genetic recombination and DNA repair, while the RuvA-RuvB complex plays an important role in the rescue of blocked DNA replication forks via replication fork reversal (RFR). RuvA specifically binds to HJ cruciform DNA, conferring on it an open structure. The RuvB hexamer acts as an ATP-dependent pump, pulling dsDNA into and through the RuvAB complex. RuvB forms 2 homohexamers on either side of HJ DNA bound by 1 or 2 RuvA tetramers; 4 subunits per hexamer contact DNA at a time. Coordinated motions by a converter formed by DNA-disengaged RuvB subunits stimulates ATP hydrolysis and nucleotide exchange. Immobilization of the converter enables RuvB to convert the ATP-contained energy into a lever motion, pulling 2 nucleotides of DNA out of the RuvA tetramer per ATP hydrolyzed, thus driving DNA branch migration. The RuvB motors rotate together with the DNA substrate, which together with the progressing nucleotide cycle form the mechanistic basis for DNA recombination by continuous HJ branch migration. Branch migration allows RuvC to scan DNA until it finds its consensus sequence, where it cleaves and resolves cruciform DNA. This is Holliday junction branch migration complex subunit RuvB from Helicobacter pylori (strain J99 / ATCC 700824) (Campylobacter pylori J99).